The primary structure comprises 360 residues: uncharacterized protein (360 aa).

The ABC transporter domain maps to 4–235; that stretch reads LSLQHIQKIY…PANMFVAGFI (232 aa). 37 to 44 contributes to the ATP binding site; that stretch reads GPSGCGKS.

The protein belongs to the ABC transporter superfamily.

This is an uncharacterized protein from Escherichia coli O6:H1 (strain CFT073 / ATCC 700928 / UPEC).